Reading from the N-terminus, the 735-residue chain is Photosystem I P700 chlorophyll a apoprotein A2 (735 aa).

8 helical membrane passes run 47 to 70 (IFAS…FHVA), 136 to 159 (LYVG…LHLQ), 176 to 200 (LNHH…HVAI), 274 to 292 (MAHH…GHMY), 331 to 354 (LHFQ…QHMY), 370 to 396 (AALY…IFWI), 418 to 440 (AIIS…LYVH), and 518 to 536 (FLVH…LILV). 2 residues coordinate [4Fe-4S] cluster: Cys560 and Cys569. The next 2 membrane-spanning stretches (helical) occupy residues 576–597 (AFYL…YWHW) and 644–666 (LSVW…MFLI). The chlorophyll a site is built by His655, Met663, and Tyr671. Trp672 serves as a coordination point for phylloquinone. A helical membrane pass occupies residues 708–728 (LVGLAHFSVGYVFTYAAFVIA).

The protein belongs to the PsaA/PsaB family. In terms of assembly, the PsaA/B heterodimer binds the P700 chlorophyll special pair and subsequent electron acceptors. PSI consists of a core antenna complex that captures photons, and an electron transfer chain that converts photonic excitation into a charge separation. The eukaryotic PSI reaction center is composed of at least 11 subunits. P700 is a chlorophyll a/chlorophyll a' dimer, A0 is one or more chlorophyll a, A1 is one or both phylloquinones and FX is a shared 4Fe-4S iron-sulfur center. is required as a cofactor.

The protein localises to the plastid. It is found in the chloroplast thylakoid membrane. It carries out the reaction reduced [plastocyanin] + hnu + oxidized [2Fe-2S]-[ferredoxin] = oxidized [plastocyanin] + reduced [2Fe-2S]-[ferredoxin]. Its function is as follows. PsaA and PsaB bind P700, the primary electron donor of photosystem I (PSI), as well as the electron acceptors A0, A1 and FX. PSI is a plastocyanin/cytochrome c6-ferredoxin oxidoreductase, converting photonic excitation into a charge separation, which transfers an electron from the donor P700 chlorophyll pair to the spectroscopically characterized acceptors A0, A1, FX, FA and FB in turn. Oxidized P700 is reduced on the lumenal side of the thylakoid membrane by plastocyanin or cytochrome c6. The sequence is that of Photosystem I P700 chlorophyll a apoprotein A2 from Tetradesmus obliquus (Green alga).